Consider the following 115-residue polypeptide: Nitrogenase-stabilizing/protective protein NifW (115 aa).

This sequence belongs to the NifW family. As to quaternary structure, homotrimer; associates with NifD.

Its function is as follows. May protect the nitrogenase Fe-Mo protein from oxidative damage. The polypeptide is Nitrogenase-stabilizing/protective protein NifW (Methylobacterium sp. (strain 4-46)).